We begin with the raw amino-acid sequence, 209 residues long: SelT-like protein (209 aa).

An N-terminal signal peptide occupies residues 1–22 (MDKTQLILLGLPIFLLCSDLFN). Cys64 and Cys67 form a disulfide bridge.

The protein belongs to the SelWTH family. SELT subfamily.

This Arabidopsis thaliana (Mouse-ear cress) protein is SelT-like protein.